A 183-amino-acid polypeptide reads, in one-letter code: uncharacterized protein (183 aa).

The segment at 1–23 is disordered; sequence MGSSFVIDRSSSSPAPPRGPAPK.

This is an uncharacterized protein from Saccharomyces cerevisiae (strain ATCC 204508 / S288c) (Baker's yeast).